A 375-amino-acid polypeptide reads, in one-letter code: Proton-coupled zinc antiporter SLC30A8 (375 aa).

The Cytoplasmic portion of the chain corresponds to 1–68 (MKGPEKAYLV…QREQTSAKKK (68 aa)). Zn(2+) contacts are provided by histidine 46, cysteine 47, and histidine 48. The HCH Motif; seals regulatory zinc-binding pocket motif lies at 46–48 (HCH). The chain crosses the membrane as a helical span at residues 69–89 (LCIASLICFVFISAEIVGGYI). Topologically, residues 90–98 (AGSLAVVTD) are lumenal, vesicle. A helical transmembrane segment spans residues 99–119 (AAHLLVDLSSFFISLGSLWLS). Residues histidine 101 and aspartate 105 each coordinate Zn(2+). Topologically, residues 120–135 (SKSSTMRLTFGWYRAE) are cytoplasmic. Residues 136-156 (ILGALMSIITIWLVTGVLVYL) traverse the membrane as a helical segment. Over 157-170 (AIERIIRPDYTIDG) the chain is Lumenal, vesicle. Residues 171 to 191 (TVMLITSACALGANVVLALIL) traverse the membrane as a helical segment. Residues 192-223 (HQSGHGHSHAGGKHEHMASEYKPQTNASIRAA) are Cytoplasmic-facing. Residues 224–244 (FIHVIGDLFQSISVLISALII) traverse the membrane as a helical segment. Histidine 226 and aspartate 230 together coordinate Zn(2+). The Lumenal, vesicle segment spans residues 245–251 (YFKPEYK). Residues 252–272 (IADPICTFIFSIFVLITTVTV) form a helical membrane-spanning segment. At 273–375 (LRDLLNILME…ECMFCYEPTQ (103 aa)) the chain is on the cytoplasmic side. Zn(2+) is bound by residues histidine 307, histidine 324, histidine 351, glutamate 358, cysteine 367, and cysteine 370.

Belongs to the cation diffusion facilitator (CDF) transporter (TC 2.A.4) family. SLC30A subfamily. In terms of assembly, homodimer.

The protein resides in the cytoplasmic vesicle. It localises to the secretory vesicle membrane. Its subcellular location is the cell membrane. It carries out the reaction Zn(2+)(in) + 2 H(+)(out) = Zn(2+)(out) + 2 H(+)(in). Proton-coupled zinc ion antiporter mediating the entry of zinc into the lumen of pancreatic beta cell secretory granules, thereby regulating insulin secretion. This Xenopus laevis (African clawed frog) protein is Proton-coupled zinc antiporter SLC30A8 (slc30a8).